The sequence spans 784 residues: LPS-assembly protein LptD (784 aa).

Residues 1 to 24 (MKKRIPTLLATMIATALYSQQGLA) form the signal peptide. Cystine bridges form between Cys31/Cys724 and Cys173/Cys725.

Belongs to the LptD family. As to quaternary structure, component of the lipopolysaccharide transport and assembly complex. Interacts with LptE and LptA. May interact with LptE during assembly of LptD by the beta-barrel assembly machine (BAM). Also interacts with LptM, which promotes the efficient assembly of the LptDE translocon by the BAM complex. Contains two intramolecular disulfide bonds. At least one disulfide bond is required for activity, and protein is probably fully oxidized in vivo.

The protein localises to the cell outer membrane. In terms of biological role, together with LptE, is involved in the assembly of lipopolysaccharide (LPS) at the surface of the outer membrane. Contributes to n-hexane resistance. The sequence is that of LPS-assembly protein LptD from Escherichia coli (strain K12).